The chain runs to 372 residues: MLRSMWNFLKRHKKKCIFLGTVLGGVYILGKYGQKKIREIQEREAAEYIAQARRQYHFESNQRTCNMTVLSMLPTLREALMQQLNSESLTALLKSRPSNKLEIWEDLKIISFTRSIVAVYSTCMLVVLLRVQLNIIGGYIYLDNATVGKNGTTVLAPPDVQQQYLSSIQHLLGDGLTELVTVIKQAVQRILGSVSLKHSLSLLDLEQKLKEIRILVEQHQSSWNDKDVSRSSLCQYMMPDEETPLAAQAYGLSHRDITTIKLLNETRDMLESPDFSTVLNTCLNRGFSRLLDNMAEFFRPTEQDLQHGNSINSLSSVSLPLAKIIPIVNGQIHSVCSETPSHFVQDLLMMEQVKDFAANVYEAFSTPQQLEK.

Residues 1–15 are Cytoplasmic-facing; that stretch reads MLRSMWNFLKRHKKK. The interval 1–45 is targeting to peroxisomes; sequence MLRSMWNFLKRHKKKCIFLGTVLGGVYILGKYGQKKIREIQEREA. The chain crosses the membrane as a helical span at residues 16 to 36; that stretch reads CIFLGTVLGGVYILGKYGQKK. At 37-116 the chain is on the peroxisomal side; it reads IREIQEREAA…LKIISFTRSI (80 aa). The helical transmembrane segment at 117-140 threads the bilayer; it reads VAVYSTCMLVVLLRVQLNIIGGYI. Residues 120–136 are interaction with PEX19; the sequence is YSTCMLVVLLRVQLNII. The Cytoplasmic segment spans residues 141-372; that stretch reads YLDNATVGKN…AFSTPQQLEK (232 aa).

It belongs to the peroxin-3 family. Interacts with PEX19. Identified in all tissues analyzed, with the strongest expression in liver and in testis.

Its subcellular location is the peroxisome membrane. Functionally, involved in peroxisome biosynthesis and integrity. Assembles membrane vesicles before the matrix proteins are translocated. As a docking factor for PEX19, is necessary for the import of peroxisomal membrane proteins in the peroxisomes. The chain is Peroxisomal biogenesis factor 3 (Pex3) from Mus musculus (Mouse).